The following is a 289-amino-acid chain: Inorganic pyrophosphatase (289 aa).

Ser2 carries the N-acetylserine modification. Lys57 carries the N6-acetyllysine modification. 3 residues coordinate Mg(2+): Asp116, Asp121, and Asp153. Residue Lys228 is modified to N6-acetyllysine. At Ser250 the chain carries Phosphoserine.

Belongs to the PPase family. In terms of assembly, homodimer. Mg(2+) serves as cofactor.

It is found in the cytoplasm. It catalyses the reaction diphosphate + H2O = 2 phosphate + H(+). The protein is Inorganic pyrophosphatase (PPA1) of Macaca fascicularis (Crab-eating macaque).